A 155-amino-acid chain; its full sequence is DNA gyrase inhibitor (155 aa).

The protein belongs to the DNA gyrase inhibitor family. Interacts with DNA gyrase.

It localises to the cytoplasm. Its function is as follows. Inhibits the supercoiling activity of DNA gyrase. Acts by inhibiting DNA gyrase at an early step, prior to (or at the step of) binding of DNA by the gyrase. It protects cells against toxins that target DNA gyrase, by inhibiting activity of these toxins and reducing the formation of lethal double-strand breaks in the cell. The sequence is that of DNA gyrase inhibitor from Erwinia billingiae (strain Eb661).